Reading from the N-terminus, the 133-residue chain is Large ribosomal subunit protein bL17 (133 aa).

It belongs to the bacterial ribosomal protein bL17 family. In terms of assembly, part of the 50S ribosomal subunit. Contacts protein L32.

This Verminephrobacter eiseniae (strain EF01-2) protein is Large ribosomal subunit protein bL17.